Here is a 601-residue protein sequence, read N- to C-terminus: Methionine--tRNA ligase (601 aa).

Residues 21–31 (PYANGPRHIGH) carry the 'HIGH' region motif. Zn(2+) contacts are provided by cysteine 153, cysteine 156, cysteine 166, and cysteine 169. Asparagine 361 lines the ATP pocket.

This sequence belongs to the class-I aminoacyl-tRNA synthetase family. MetG type 1 subfamily. Monomer. Zn(2+) serves as cofactor.

It localises to the cytoplasm. It catalyses the reaction tRNA(Met) + L-methionine + ATP = L-methionyl-tRNA(Met) + AMP + diphosphate. Functionally, is required not only for elongation of protein synthesis but also for the initiation of all mRNA translation through initiator tRNA(fMet) aminoacylation. The chain is Methionine--tRNA ligase from Cutibacterium acnes (strain DSM 16379 / KPA171202) (Propionibacterium acnes).